The primary structure comprises 295 residues: uncharacterized protein (295 aa).

An N-terminal signal peptide occupies residues 1–19 (MHKLLLIITVFSTFNVAQA).

This is an uncharacterized protein from Rickettsia typhi (strain ATCC VR-144 / Wilmington).